The chain runs to 234 residues: Small ribosomal subunit protein uS10m (234 aa).

Residues 1 to 23 constitute a mitochondrion transit peptide; sequence MLRIGYRGFSTRSRVFKLSPQEY.

Belongs to the universal ribosomal protein uS10 family. In terms of assembly, component of the mitochondrial small ribosomal subunit (mt-SSU).

It is found in the mitochondrion. Its function is as follows. Component of the mitochondrial ribosome (mitoribosome), a dedicated translation machinery responsible for the synthesis of mitochondrial genome-encoded proteins, including at least some of the essential transmembrane subunits of the mitochondrial respiratory chain. The mitoribosomes are attached to the mitochondrial inner membrane and translation products are cotranslationally integrated into the membrane. The protein is Small ribosomal subunit protein uS10m (RSM10) of Candida albicans (strain SC5314 / ATCC MYA-2876) (Yeast).